Here is a 411-residue protein sequence, read N- to C-terminus: Mitotic apparatus protein p62 (411 aa).

Composition is skewed to acidic residues over residues 134–156, 183–201, and 246–321; these read AYEVGDEDLEDEDEGEEDEEEEE, ELDEDEDDDEEEEEEEEEI, and DDDE…EEDS. The disordered stretch occupies residues 134-378; it reads AYEVGDEDLE…KSPSKPKKEE (245 aa). The span at 351–367 shows a compositional bias: basic and acidic residues; the sequence is GMKEKKTYSLEDMKQDL.

It belongs to the nucleoplasmin family. In terms of processing, phosphorylated by CaM-kinase II in vitro.

Its subcellular location is the nucleus. Functionally, required for mitotic progression. Binds to chromatin. This Lytechinus pictus (Painted sea urchin) protein is Mitotic apparatus protein p62.